The following is a 211-amino-acid chain: ATP-dependent Clp protease proteolytic subunit (211 aa).

Ser-106 functions as the Nucleophile in the catalytic mechanism. Residue His-131 is part of the active site.

It belongs to the peptidase S14 family. In terms of assembly, fourteen ClpP subunits assemble into 2 heptameric rings which stack back to back to give a disk-like structure with a central cavity, resembling the structure of eukaryotic proteasomes.

It localises to the cytoplasm. It carries out the reaction Hydrolysis of proteins to small peptides in the presence of ATP and magnesium. alpha-casein is the usual test substrate. In the absence of ATP, only oligopeptides shorter than five residues are hydrolyzed (such as succinyl-Leu-Tyr-|-NHMec, and Leu-Tyr-Leu-|-Tyr-Trp, in which cleavage of the -Tyr-|-Leu- and -Tyr-|-Trp bonds also occurs).. In terms of biological role, cleaves peptides in various proteins in a process that requires ATP hydrolysis. Has a chymotrypsin-like activity. Plays a major role in the degradation of misfolded proteins. The protein is ATP-dependent Clp protease proteolytic subunit of Maricaulis maris (strain MCS10) (Caulobacter maris).